The following is a 248-amino-acid chain: Probable N-acetylglucosaminyl-phosphatidylinositol de-N-acetylase (248 aa).

At 1–7 the chain is on the lumenal side; sequence MIWFWST. The chain crosses the membrane as a helical span at residues 8–24; that stretch reads LLVTAIAVLSTANESSS. The Cytoplasmic portion of the chain corresponds to 25-248; sequence GQEKLAVESI…MSNNVLKRAT (224 aa).

This sequence belongs to the PIGL family.

Its subcellular location is the endoplasmic reticulum membrane. The catalysed reaction is a 6-(N-acetyl-alpha-D-glucosaminyl)-1-(1,2-diacyl-sn-glycero-3-phospho)-1D-myo-inositol + H2O = a 6-(alpha-D-glucosaminyl)-1-(1,2-diacyl-sn-glycero-3-phospho)-1D-myo-inositol + acetate. The protein operates within glycolipid biosynthesis; glycosylphosphatidylinositol-anchor biosynthesis. In terms of biological role, involved in the second step of GPI biosynthesis. De-N-acetylation of N-acetylglucosaminyl-phosphatidylinositol. The sequence is that of Probable N-acetylglucosaminyl-phosphatidylinositol de-N-acetylase (gpi12) from Schizosaccharomyces pombe (strain 972 / ATCC 24843) (Fission yeast).